The following is a 542-amino-acid chain: Chaperonin GroEL (542 aa).

ATP-binding positions include 29–32 (TIGP), 86–90 (DGTTT), Gly-413, 477–479 (NAA), and Asp-493.

Belongs to the chaperonin (HSP60) family. Forms a cylinder of 14 subunits composed of two heptameric rings stacked back-to-back. Interacts with the co-chaperonin GroES.

It is found in the cytoplasm. The enzyme catalyses ATP + H2O + a folded polypeptide = ADP + phosphate + an unfolded polypeptide.. Functionally, together with its co-chaperonin GroES, plays an essential role in assisting protein folding. The GroEL-GroES system forms a nano-cage that allows encapsulation of the non-native substrate proteins and provides a physical environment optimized to promote and accelerate protein folding. The protein is Chaperonin GroEL of Lactobacillus acidophilus (strain ATCC 700396 / NCK56 / N2 / NCFM).